The primary structure comprises 430 residues: Stress protein DDR48 (430 aa).

The segment at 1 to 430 (MGLFDKVKQF…RNQYGGDDDY (430 aa)) is disordered. Residues 12 to 27 (NSNNNNNDSGNNNQGD) are compositionally biased toward low complexity. A compositionally biased stretch (basic and acidic residues) spans 37 to 60 (GEDRVNQFKSKIGEDRFDKMESKV). The segment covering 70 to 421 (NDNDSNNNDS…SYGSSNRGGR (352 aa)) has biased composition (low complexity). 6 repeat units span residues 74–81 (SNNNDSYG), 82–89 (SNNNDSYG), 90–97 (SNNNDSYG), 98–105 (SNNNDSYG), 106–113 (SNNNDSYG), and 114–121 (SNNDDSYG). Positions 74–414 (SNNNDSYGSN…GSSNNDDSYG (341 aa)) are 38 X 8 AA approximate tandem repeats of S-[NS]-N-[ND]-D-S-Y-G. A 7; approximate repeat occupies 124–131 (NKKKSSYG). Repeat copies occupy residues 132–139 (SNNDDSYG), 141–148 (SNNNDSYG), 149–156 (SNNNDSYG), 157–164 (SNNNDSYG), and 165–172 (SNNDDSYG). Residues 175–182 (NKNKSSYG) form a 13; approximate repeat. Phosphoserine occurs at positions 183 and 191. 2 tandem repeats follow at residues 183-190 (SNNDDSYG) and 191-198 (SNNDDSYG). The stretch at 201-208 (NKKKSSYG) is one 16; approximate repeat. 4 consecutive repeat copies span residues 209–216 (SSNNDSYG), 217–224 (SNNDDSYG), 225–232 (SNNNDSYG), and 233–240 (SNNDDSYG). Residues 243–250 (NKKKSSYG) form a 21; approximate repeat. 3 repeat units span residues 251 to 258 (SNNDDSYG), 260 to 267 (SNNNDSYG), and 268 to 275 (SNNDDSYG). The 25; approximate repeat unit spans residues 278–285 (NKNKSSYG). A run of 2 repeats spans residues 287–294 (SSNDDSYG) and 296–303 (SNNDDSYG). The stretch at 306–313 (NKKKSSYG) is one 28; approximate repeat. A phosphoserine mark is found at Ser314 and Ser322. A run of 2 repeats spans residues 314-321 (SNNDDSYG) and 322-329 (SNNDDSYG). The stretch at 332-339 (NKKKSSYG) is one 31; approximate repeat. Tandem repeats lie at residues 340-347 (SSNNDSYG) and 348-355 (SNNDDSYG). A 34; approximate repeat occupies 358–365 (NKKKSSYG). 2 repeat units span residues 366–373 (SNNDDSYG) and 375–382 (SNNNDSYG). Residues 393–400 (NRNKNSYG) form a 37; approximate repeat. Repeat unit 38 spans residues 407 to 414 (SNNDDSYG).

This sequence belongs to the DDR48 family. In terms of processing, probably highly glycosylated.

DNA damage-responsive protein that may be required for maintaining the rate of spontaneous mutagenesis. Shows low ATP and GTP hydrolysis activity. Dispensable for acquisition of thermotolerance and does not play a significant role in recovery or protection of cells from acute heat shock. This is Stress protein DDR48 (DDR48) from Saccharomyces cerevisiae (strain ATCC 204508 / S288c) (Baker's yeast).